The following is a 149-amino-acid chain: Cytochrome c-555 (149 aa).

The signal sequence occupies residues 1-20; the sequence is MKRTMIVVTTLLLGAGAVMA. 4 residues coordinate heme c: M32, C137, C140, and H141.

As to quaternary structure, monomer. In terms of processing, binds 1 heme c group covalently per subunit.

It is found in the periplasm. Functionally, low-spin monoheme cytochrome. This is Cytochrome c-555 (cycC) from Bradyrhizobium diazoefficiens (strain JCM 10833 / BCRC 13528 / IAM 13628 / NBRC 14792 / USDA 110).